Here is a 404-residue protein sequence, read N- to C-terminus: Cysteine desulfurase IscS (404 aa).

Pyridoxal 5'-phosphate is bound by residues 75 to 76 (AT), Asn155, Gln183, and 203 to 205 (SAH). At Lys206 the chain carries N6-(pyridoxal phosphate)lysine. Residue Thr243 coordinates pyridoxal 5'-phosphate. The active-site Cysteine persulfide intermediate is the Cys328. A [2Fe-2S] cluster-binding site is contributed by Cys328.

This sequence belongs to the class-V pyridoxal-phosphate-dependent aminotransferase family. NifS/IscS subfamily. As to quaternary structure, homodimer. Forms a heterotetramer with IscU, interacts with other sulfur acceptors. Pyridoxal 5'-phosphate serves as cofactor.

The protein resides in the cytoplasm. The enzyme catalyses (sulfur carrier)-H + L-cysteine = (sulfur carrier)-SH + L-alanine. Its pathway is cofactor biosynthesis; iron-sulfur cluster biosynthesis. In terms of biological role, master enzyme that delivers sulfur to a number of partners involved in Fe-S cluster assembly, tRNA modification or cofactor biosynthesis. Catalyzes the removal of elemental sulfur atoms from cysteine to produce alanine. Functions as a sulfur delivery protein for Fe-S cluster synthesis onto IscU, an Fe-S scaffold assembly protein, as well as other S acceptor proteins. This Shewanella loihica (strain ATCC BAA-1088 / PV-4) protein is Cysteine desulfurase IscS.